A 156-amino-acid chain; its full sequence is Protein-export protein SecB (156 aa).

This sequence belongs to the SecB family. As to quaternary structure, homotetramer, a dimer of dimers. One homotetramer interacts with 1 SecA dimer.

It is found in the cytoplasm. Functionally, one of the proteins required for the normal export of preproteins out of the cell cytoplasm. It is a molecular chaperone that binds to a subset of precursor proteins, maintaining them in a translocation-competent state. It also specifically binds to its receptor SecA. The polypeptide is Protein-export protein SecB (Pectobacterium carotovorum subsp. carotovorum (strain PC1)).